The primary structure comprises 198 residues: Segregation and condensation protein B (198 aa).

This sequence belongs to the ScpB family. In terms of assembly, homodimer. Homodimerization may be required to stabilize the binding of ScpA to the Smc head domains. Component of a cohesin-like complex composed of ScpA, ScpB and the Smc homodimer, in which ScpA and ScpB bind to the head domain of Smc. The presence of the three proteins is required for the association of the complex with DNA.

The protein resides in the cytoplasm. Functionally, participates in chromosomal partition during cell division. May act via the formation of a condensin-like complex containing Smc and ScpA that pull DNA away from mid-cell into both cell halves. In Streptococcus mutans serotype c (strain ATCC 700610 / UA159), this protein is Segregation and condensation protein B.